The primary structure comprises 465 residues: ATP-sulfurylase 3, chloroplastic (465 aa).

The N-terminal 49 residues, 1 to 49, are a transit peptide targeting the chloroplast; sequence MASMSTVFPKPTSFISQPLTKSHKSDSVTTSISFPSNSKTRSLRTISVR.

The protein belongs to the sulfate adenylyltransferase family. In terms of assembly, homotetramer.

The protein localises to the plastid. Its subcellular location is the chloroplast stroma. The enzyme catalyses sulfate + ATP + H(+) = adenosine 5'-phosphosulfate + diphosphate. Its pathway is sulfur metabolism; hydrogen sulfide biosynthesis; sulfite from sulfate: step 1/3. The chain is ATP-sulfurylase 3, chloroplastic (APS3) from Arabidopsis thaliana (Mouse-ear cress).